The following is a 464-amino-acid chain: Soluble pyridine nucleotide transhydrogenase (464 aa).

Asp35–Cys44 lines the FAD pocket.

The protein belongs to the class-I pyridine nucleotide-disulfide oxidoreductase family. FAD serves as cofactor.

Its subcellular location is the cytoplasm. It carries out the reaction NAD(+) + NADPH = NADH + NADP(+). Its function is as follows. Conversion of NADPH, generated by peripheral catabolic pathways, to NADH, which can enter the respiratory chain for energy generation. In Azotobacter vinelandii (strain DJ / ATCC BAA-1303), this protein is Soluble pyridine nucleotide transhydrogenase.